Here is a 306-residue protein sequence, read N- to C-terminus: sn-1-specific diacylglycerol lipase ABHD11 (306 aa).

The disordered stretch occupies residues 19 to 40 (GPSFARVPVAPSSSSGGRGGAE). Low complexity predominate over residues 23–33 (ARVPVAPSSSS). Position 78 is an N6-succinyllysine (K78). Catalysis depends on charge relay system residues S132, D228, and H287.

This sequence belongs to the AB hydrolase superfamily. As to quaternary structure, interacts with OGDH and DLST; this interaction maintains the functional lipoylation of the 2-oxoglutarate dehydrogenase complex. Post-translationally, phosphorylated. Ubiquitously expressed. Highly expressed in small intestine, prostate and thyroid, while aorta and colon tissues exhibit weak expression levels.

It localises to the mitochondrion. The protein resides in the mitochondrion matrix. The catalysed reaction is 1-octadecanoyl-2-(5Z,8Z,11Z,14Z-eicosatetraenoyl)-sn-glycerol + H2O = 2-(5Z,8Z,11Z,14Z-eicosatetraenoyl)-glycerol + octadecanoate + H(+). It carries out the reaction a 1,2-diacyl-sn-glycerol + H2O = a 2-acylglycerol + a fatty acid + H(+). The enzyme catalyses a 1,3-diacyl-sn-glycerol + H2O = a 1-acyl-sn-glycerol + a fatty acid + H(+). It catalyses the reaction 1-octadecanoyl-2-(9Z-octadecenoyl)-sn-glycerol + H2O = 2-(9Z-octadecenoyl)-glycerol + octadecanoate + H(+). The catalysed reaction is 1-octadecanoyl-2-(4Z,7Z,10Z,13Z,16Z,19Z-docosahexaenoyl)-sn-glycerol + H2O = 2-(4Z,7Z,10Z,13Z,16Z,19Z-docosahexaenoyl)-glycerol + octadecanoate + H(+). It carries out the reaction 1,2-didecanoylglycerol + H2O = decanoylglycerol + decanoate + H(+). Catalyzes the hydrolysis of diacylglycerol in vitro and may function as a key regulator in lipid metabolism, namely by regulating the intracellular levels of diacylglycerol. 1,2-diacyl-sn-glycerols are the preferred substrate over 1,3-diacyl-sn-glycerols. The enzyme hydrolyzes stearate in preference to palmitate from the sn-1 position of 1,2-diacyl-sn-glycerols. Maintains the functional lipoylation of the 2-oxoglutarate dehydrogenase complex (OGDHc) through its interaction with the OGDHc by preventing the formation of lipoyl adducts. In addition, is also required for the expansion and differentiation of embryonic stem cells (ESCs). This chain is sn-1-specific diacylglycerol lipase ABHD11, found in Homo sapiens (Human).